The primary structure comprises 302 residues: Protoheme IX farnesyltransferase (302 aa).

Helical transmembrane passes span 28 to 48 (LALL…SLDP), 50 to 70 (MLAL…AFNM), 93 to 115 (LNPY…SAAA), 119 to 138 (YVAL…YTQL), 147 to 167 (IIFG…AAAG), 172 to 192 (GGVL…WFLG), 219 to 239 (LIAV…LYYG), 242 to 262 (FLTA…IGGF), and 271 to 291 (ALKL…ILPL).

The protein belongs to the UbiA prenyltransferase family. Protoheme IX farnesyltransferase subfamily.

It localises to the cell membrane. The enzyme catalyses heme b + (2E,6E)-farnesyl diphosphate + H2O = Fe(II)-heme o + diphosphate. The protein operates within porphyrin-containing compound metabolism; heme O biosynthesis; heme O from protoheme: step 1/1. Functionally, converts heme B (protoheme IX) to heme O by substitution of the vinyl group on carbon 2 of heme B porphyrin ring with a hydroxyethyl farnesyl side group. In Aeropyrum pernix (strain ATCC 700893 / DSM 11879 / JCM 9820 / NBRC 100138 / K1), this protein is Protoheme IX farnesyltransferase.